The chain runs to 393 residues: tRNA(Met) cytidine acetate ligase (393 aa).

Positions 81, 142, and 167 each coordinate ATP.

It belongs to the TmcAL family.

Its subcellular location is the cytoplasm. The enzyme catalyses cytidine(34) in elongator tRNA(Met) + acetate + ATP = N(4)-acetylcytidine(34) in elongator tRNA(Met) + AMP + diphosphate. Functionally, catalyzes the formation of N(4)-acetylcytidine (ac(4)C) at the wobble position of elongator tRNA(Met), using acetate and ATP as substrates. First activates an acetate ion to form acetyladenylate (Ac-AMP) and then transfers the acetyl group to tRNA to form ac(4)C34. The sequence is that of tRNA(Met) cytidine acetate ligase from Bacillus cereus (strain AH820).